We begin with the raw amino-acid sequence, 332 residues long: ATP-dependent (S)-NAD(P)H-hydrate dehydratase (332 aa).

In terms of domain architecture, YjeF C-terminal spans 46–326 (LLERARNIVP…EQIHNVFDDI (281 aa)). Residues G146 and 199-205 (NAIEFCR) each bind (6S)-NADPHX. ATP-binding positions include 230–234 (KGLND) and 251–260 (GSGRRCGGQG). (6S)-NADPHX is bound at residue D261.

This sequence belongs to the NnrD/CARKD family. Requires Mg(2+) as cofactor.

It carries out the reaction (6S)-NADHX + ATP = ADP + phosphate + NADH + H(+). The catalysed reaction is (6S)-NADPHX + ATP = ADP + phosphate + NADPH + H(+). Functionally, catalyzes the dehydration of the S-form of NAD(P)HX at the expense of ATP, which is converted to ADP. Together with NAD(P)HX epimerase, which catalyzes the epimerization of the S- and R-forms, the enzyme allows the repair of both epimers of NAD(P)HX, a damaged form of NAD(P)H that is a result of enzymatic or heat-dependent hydration. This chain is ATP-dependent (S)-NAD(P)H-hydrate dehydratase, found in Aedes aegypti (Yellowfever mosquito).